A 688-amino-acid polypeptide reads, in one-letter code: Lipase (688 aa).

The N-terminal stretch at 1-35 (MKTRQNKYSIRKFSVGASSILIAALLFMGGGSAQA) is a signal peptide. Residues 31-309 (GSAQAAEQQQ…KSAKQKQYKN (279 aa)) are disordered. Residues 36–302 (AEQQQDKGTV…KNEDQTNKSA (267 aa)) constitute a propeptide, removed in mature form. Residues 45 to 54 (VENSTTQSIG) are compositionally biased toward polar residues. Low complexity predominate over residues 68–79 (NKNVNEKSNVNS). Composition is skewed to basic and acidic residues over residues 84–95 (ESLHNETPKNED) and 103–143 (SQND…KHAS). The segment covering 144–172 (ENNQTLHSKAAQSNEDVKTKPSQLDNTAA) has biased composition (polar residues). Positions 173-183 (KQEDSQKENLS) are enriched in basic and acidic residues. Positions 184–211 (KQDTQSSKTTDLLRATAQNQSKDSQSTE) are enriched in polar residues. Basic and acidic residues predominate over residues 240-267 (SKEEPLKVDKQANPTTDKDKSSKNDKGS). The segment covering 274–289 (LESNAVATTNKQSKQQ) has biased composition (polar residues). Catalysis depends on Ser418, which acts as the Nucleophile. The active-site Charge relay system is the Asp609. Ca(2+) is bound at residue Asp647. His648 serves as the catalytic Charge relay system. Ca(2+) contacts are provided by Asp650, Asp655, and Asp658.

The protein belongs to the AB hydrolase superfamily. Lipase family.

The protein localises to the secreted. It carries out the reaction a triacylglycerol + H2O = a diacylglycerol + a fatty acid + H(+). In Staphylococcus epidermidis (strain ATCC 12228 / FDA PCI 1200), this protein is Lipase (lip).